Consider the following 458-residue polypeptide: Pyruvate kinase (458 aa).

Arg-33 provides a ligand contact to substrate. Positions 35, 37, and 67 each coordinate K(+). 35–38 contributes to the ATP binding site; sequence NASH. Residues Arg-74 and Lys-148 each contribute to the ATP site. Position 214 (Glu-214) interacts with Mg(2+). Substrate is bound by residues Gly-237, Asp-238, and Thr-270. Asp-238 lines the Mg(2+) pocket.

The protein belongs to the pyruvate kinase family. Homotetramer. The cofactor is a divalent metal cation.

The catalysed reaction is pyruvate + ATP = phosphoenolpyruvate + ADP + H(+). The protein operates within carbohydrate degradation; glycolysis; pyruvate from D-glyceraldehyde 3-phosphate: step 5/5. With respect to regulation, not activated by classical allosteric effectors. This is Pyruvate kinase (pyk) from Aeropyrum pernix (strain ATCC 700893 / DSM 11879 / JCM 9820 / NBRC 100138 / K1).